The sequence spans 204 residues: 3-isopropylmalate dehydratase small subunit (204 aa).

It belongs to the LeuD family. LeuD type 1 subfamily. As to quaternary structure, heterodimer of LeuC and LeuD.

It carries out the reaction (2R,3S)-3-isopropylmalate = (2S)-2-isopropylmalate. Its pathway is amino-acid biosynthesis; L-leucine biosynthesis; L-leucine from 3-methyl-2-oxobutanoate: step 2/4. Catalyzes the isomerization between 2-isopropylmalate and 3-isopropylmalate, via the formation of 2-isopropylmaleate. This chain is 3-isopropylmalate dehydratase small subunit, found in Psychromonas ingrahamii (strain DSM 17664 / CCUG 51855 / 37).